The following is a 482-amino-acid chain: MIKVSNALQRILIGAALALFGGGAQAAAADSAAAAEKAPPKIEARNDRFAAPHPDQYASWKATAEQSEISDALAEDPRLVILWAGYAFAKDYNKPRGHAYALTDVRETLRTGAPMKPEDGPQPMACWSCKSPDVARVIAEQGEAAYFHGMWARGGPEIVNALGCADCHNTASDDFAAGKPALQLSRPYAARALEAIGKPFDKANRIDQQSMVCGQCHVEYYFSGKDKTVKFPWDQGTSVDEIEAYYDGIAFTDWVNPLSKAPMLKAQHPDYETWRAGIHGQNNISCVDCHMPKVQNAEGKLYTSHKIGNPFDSFEQTCRTCHTQDKATLQQTVAKRKQDVNEIKLKVEDQLVRAHFEAKAAWAAGASEAEMQPILTDIRHAQWRWDFSIASHGVHMHAPDVALRMLGTALDKAANARTQLVRVLANHGVNDAVPLPDISTKALAQQALGMNMQQFTQEKQTFLNTVVPEWEAQARSAGRLDH.

The signal sequence occupies residues M1 to A26. H98 is a heme c binding site. C126, C129, and K130 together coordinate heme. Residues C164, C167, H168, C213, C216, and H217 each contribute to the heme c site. Residues E219, Y220, K265, and Q267 each contribute to the Ca(2+) site. Y220 is a binding site for substrate. Residue H268 coordinates substrate. Residues H279, C286, C289, H290, H305, C318, C321, H322, and H397 each coordinate heme c.

The protein belongs to the cytochrome c-552 family. It depends on Ca(2+) as a cofactor. Requires heme c as cofactor.

The protein localises to the periplasm. The catalysed reaction is 6 Fe(III)-[cytochrome c] + NH4(+) + 2 H2O = 6 Fe(II)-[cytochrome c] + nitrite + 8 H(+). The protein operates within nitrogen metabolism; nitrate reduction (assimilation). Catalyzes the reduction of nitrite to ammonia, consuming six electrons in the process. This is Cytochrome c-552 from Edwardsiella ictaluri (strain 93-146).